The primary structure comprises 387 residues: 3-ketoacyl-CoA thiolase (387 aa).

Cys91 (acyl-thioester intermediate) is an active-site residue. Catalysis depends on proton acceptor residues His343 and Cys373.

It belongs to the thiolase-like superfamily. Thiolase family. In terms of assembly, heterotetramer of two alpha chains (FadB) and two beta chains (FadA).

It is found in the cytoplasm. The enzyme catalyses an acyl-CoA + acetyl-CoA = a 3-oxoacyl-CoA + CoA. It functions in the pathway lipid metabolism; fatty acid beta-oxidation. In terms of biological role, catalyzes the final step of fatty acid oxidation in which acetyl-CoA is released and the CoA ester of a fatty acid two carbons shorter is formed. The protein is 3-ketoacyl-CoA thiolase of Shigella flexneri serotype 5b (strain 8401).